A 73-amino-acid polypeptide reads, in one-letter code: Putative ORF9c protein (73 aa).

A helical transmembrane segment spans residues Ala47–Leu67.

The protein resides in the membrane. Its function is as follows. May induce apoptosis in cardiomyocytes when overexpressed ex-vivo. This is Putative ORF9c protein from Homo sapiens (Human).